A 66-amino-acid chain; its full sequence is MKEGIHPMYSDATVKCLCGNTFQTRSTRKEINTEICSACHPFFTGKQKLIDTAGRVERFKRRYGQV.

Residues Cys-16, Cys-18, Cys-36, and Cys-39 each contribute to the Zn(2+) site.

It belongs to the bacterial ribosomal protein bL31 family. Type A subfamily. In terms of assembly, part of the 50S ribosomal subunit. It depends on Zn(2+) as a cofactor.

Functionally, binds the 23S rRNA. In Pelobacter propionicus (strain DSM 2379 / NBRC 103807 / OttBd1), this protein is Large ribosomal subunit protein bL31.